Consider the following 373-residue polypeptide: GTP cyclohydrolase 1 type 2 homolog (373 aa).

Residues His-68, His-69, Asp-107, His-333, and Glu-336 each contribute to the a divalent metal cation site.

The protein belongs to the GTP cyclohydrolase I type 2/NIF3 family. In terms of assembly, homohexamer.

The sequence is that of GTP cyclohydrolase 1 type 2 homolog (yqfO) from Bacillus subtilis (strain 168).